The primary structure comprises 61 residues: Protein TfaX (61 aa).

The protein belongs to the tfa family.

Its function is as follows. Might play a role in cell growth during glycolysis. The protein is Protein TfaX (tfaX) of Escherichia coli (strain K12).